The sequence spans 166 residues: MARYLEVSDIVQQWRNERPDLDVEPMLVIGTLSRVSLLIDRALDKVFSKYKLSAREFDILATLRRRGAPYAISPSQIVNALMINNSTLTSRLDRLEQAGWLRRMPIEGDRRSVNIQLTDEGFALINRVVEEHVENERDILSPFSEEEKTHLRALLGRVEKHLVNNR.

Residues 25 to 160 enclose the HTH marR-type domain; it reads PMLVIGTLSR…LRALLGRVEK (136 aa).

Its subcellular location is the cytoplasm. With respect to regulation, the presence of PecM is required to ensure the full regulation of the pecS-pecM intergenic region by PecS. In terms of biological role, negatively regulates the expression of genes encoding pectinase and cellulase, which play a major role in virulence, and the expression of the blue pigment indigoidine, which is implicated in pathogenicity and protection from oxidative stress. Represses the expression of genes involved in indigoidine biosynthesis by binding to indA and indC promoter regions. Also binds to promoter sites in the pecS-pecM intergenic region and negatively autoregulates its expression as well as that of pecM. This is HTH-type transcriptional regulator PecS from Dickeya dadantii (strain 3937) (Erwinia chrysanthemi (strain 3937)).